The sequence spans 683 residues: UvrABC system protein B (683 aa).

The 384-residue stretch at 31–414 folds into the Helicase ATP-binding domain; it reads AGFEKGYKEQ…ELERTDHKVE (384 aa). 44–51 lines the ATP pocket; sequence GATGTGKT. Positions 97-120 match the Beta-hairpin motif; sequence YYDYYQPEAYVPQSDTYIEKDSAI. Residues 435-601 enclose the Helicase C-terminal domain; the sequence is QIDDLVGEIN…TIIKPVHDVI (167 aa). The UVR domain occupies 632–667; it reads KTMIKNLQEQMKEAAKKLDFEEAANLRDAIMELQSS. The disordered stretch occupies residues 662 to 683; sequence MELQSSSRRPKTRKGKALNGKR. The segment covering 669–683 has biased composition (basic residues); it reads RRPKTRKGKALNGKR.

This sequence belongs to the UvrB family. In terms of assembly, forms a heterotetramer with UvrA during the search for lesions. Interacts with UvrC in an incision complex.

Its subcellular location is the cytoplasm. The UvrABC repair system catalyzes the recognition and processing of DNA lesions. A damage recognition complex composed of 2 UvrA and 2 UvrB subunits scans DNA for abnormalities. Upon binding of the UvrA(2)B(2) complex to a putative damaged site, the DNA wraps around one UvrB monomer. DNA wrap is dependent on ATP binding by UvrB and probably causes local melting of the DNA helix, facilitating insertion of UvrB beta-hairpin between the DNA strands. Then UvrB probes one DNA strand for the presence of a lesion. If a lesion is found the UvrA subunits dissociate and the UvrB-DNA preincision complex is formed. This complex is subsequently bound by UvrC and the second UvrB is released. If no lesion is found, the DNA wraps around the other UvrB subunit that will check the other stand for damage. This chain is UvrABC system protein B, found in Lactobacillus acidophilus (strain ATCC 700396 / NCK56 / N2 / NCFM).